A 1548-amino-acid polypeptide reads, in one-letter code: Zinc finger MYM-type protein 4 (1548 aa).

Ala-2 carries the N-acetylalanine modification. Thr-107 carries the phosphothreonine modification. Residues Ser-110 and Ser-122 each carry the phosphoserine modification. Glycyl lysine isopeptide (Lys-Gly) (interchain with G-Cter in SUMO2) cross-links involve residues Lys-140 and Lys-149. Ser-162 carries the phosphoserine modification. Positions 162 to 189 are disordered; sequence SKETFSGKEKNRDLTYEREKRLDKPHKD. A Glycyl lysine isopeptide (Lys-Gly) (interchain with G-Cter in SUMO2) cross-link involves residue Lys-195. At Ser-197 the chain carries Phosphoserine. Glycyl lysine isopeptide (Lys-Gly) (interchain with G-Cter in SUMO2) cross-links involve residues Lys-201 and Lys-232. Position 242 is a phosphoserine (Ser-242). Residue Lys-250 forms a Glycyl lysine isopeptide (Lys-Gly) (interchain with G-Cter in SUMO1); alternate linkage. Residue Lys-250 forms a Glycyl lysine isopeptide (Lys-Gly) (interchain with G-Cter in SUMO2); alternate linkage. Residues Lys-260, Lys-271, Lys-273, Lys-289, Lys-327, Lys-400, Lys-428, and Lys-430 each participate in a glycyl lysine isopeptide (Lys-Gly) (interchain with G-Cter in SUMO2) cross-link. 9 consecutive MYM-type zinc fingers follow at residues 362–402, 414–457, 464–499, 510–544, 554–592, 600–631, 708–742, 749–788, and 795–829; these read QLFC…PKDV, KDFC…RHEV, HKLC…GSGQ, KKFC…AEMI, ELFC…QYHL, RNFC…LSQG, FQFC…KETV, KSFC…LVQN, and EEFC…SESL. Position 1030 is a phosphoserine (Ser-1030). Residues Lys-1035 and Lys-1061 each participate in a glycyl lysine isopeptide (Lys-Gly) (interchain with G-Cter in SUMO2) cross-link. Ser-1064 and Ser-1071 each carry phosphoserine. Residues Lys-1080 and Lys-1127 each participate in a glycyl lysine isopeptide (Lys-Gly) (interchain with G-Cter in SUMO2) cross-link. Basic and acidic residues predominate over residues 1124 to 1134; sequence SELKQFSKGET. Disordered stretches follow at residues 1124–1183 and 1231–1260; these read SELK…KSIV and KCGG…QESS. Over residues 1160–1181 the composition is skewed to basic residues; the sequence is SRTRRRHRDGFPQPRRRGRKKS. 2 positions are modified to phosphoserine: Ser-1181 and Ser-1256. Residues 1237–1260 are compositionally biased toward polar residues; the sequence is QASSSPRSDPLGSTQDHALSQESS. Lys-1431 participates in a covalent cross-link: Glycyl lysine isopeptide (Lys-Gly) (interchain with G-Cter in SUMO2). A phosphoserine mark is found at Ser-1539, Ser-1542, and Ser-1547.

In terms of tissue distribution, expressed at higher level in heart, skeletal muscle, kidney and liver.

Its function is as follows. Plays a role in the regulation of cell morphology and cytoskeletal organization. The protein is Zinc finger MYM-type protein 4 (ZMYM4) of Homo sapiens (Human).